The following is a 419-amino-acid chain: Serine hydroxymethyltransferase (419 aa).

(6S)-5,6,7,8-tetrahydrofolate-binding positions include L121 and 125 to 127 (GHL). Residue K230 is modified to N6-(pyridoxal phosphate)lysine. Position 354–356 (354–356 (SPF)) interacts with (6S)-5,6,7,8-tetrahydrofolate.

This sequence belongs to the SHMT family. Homodimer. Pyridoxal 5'-phosphate serves as cofactor.

Its subcellular location is the cytoplasm. It catalyses the reaction (6R)-5,10-methylene-5,6,7,8-tetrahydrofolate + glycine + H2O = (6S)-5,6,7,8-tetrahydrofolate + L-serine. The protein operates within one-carbon metabolism; tetrahydrofolate interconversion. It functions in the pathway amino-acid biosynthesis; glycine biosynthesis; glycine from L-serine: step 1/1. Functionally, catalyzes the reversible interconversion of serine and glycine with tetrahydrofolate (THF) serving as the one-carbon carrier. This reaction serves as the major source of one-carbon groups required for the biosynthesis of purines, thymidylate, methionine, and other important biomolecules. Also exhibits THF-independent aldolase activity toward beta-hydroxyamino acids, producing glycine and aldehydes, via a retro-aldol mechanism. This is Serine hydroxymethyltransferase from Prochlorococcus marinus (strain SARG / CCMP1375 / SS120).